A 420-amino-acid polypeptide reads, in one-letter code: Protein-lysine 6-oxidase (420 aa).

The first 27 residues, methionine 1 to cysteine 27, serve as a signal peptide directing secretion. Positions glutamine 28–glycine 171 are cleaved as a propeptide — removed by BMP1. Residues alanine 54–proline 177 form a disordered region. A glycan (N-linked (GlcNAc...) asparagine) is linked at asparagine 78. Residues proline 82–proline 92 are compositionally biased toward low complexity. The span at glutamine 93–arginine 105 shows a compositional bias: pro residues. Basic residues-rich tracts occupy residues arginine 107–tryptophan 119 and alanine 134–arginine 147. The residue at position 190 (tyrosine 190) is a Sulfotyrosine. The interval proline 216–tyrosine 420 is lysyl-oxidase like. 5 disulfide bridges follow: cysteine 241-cysteine 247, cysteine 294-cysteine 343, cysteine 327-cysteine 333, cysteine 354-cysteine 364, and cysteine 401-cysteine 415. Cu cation-binding residues include histidine 295, histidine 297, and histidine 299. The lysine tyrosylquinone (Lys-Tyr) cross-link spans lysine 323–tyrosine 358. Residue tyrosine 358 is modified to 2',4',5'-topaquinone.

It belongs to the lysyl oxidase family. Requires Cu cation as cofactor. The cofactor is lysine tyrosylquinone residue. The lysine tyrosylquinone cross-link (LTQ) is generated by condensation of the epsilon-amino group of a lysine with a topaquinone produced by oxidation of tyrosine. Post-translationally, proteolytically cleaved by BMP1 which removes the propeptide. Also proteolytically cleaved by ADAMTS2 and ADAMTS14, but not by ADAMTS3, at an additional cleavage site downstream of the BMP1 cleavage site. The propeptide plays a role in directing the deposition of this enzyme to elastic fibers, via interaction with tropoelastin. Cleavage by BMP1 to remove the propeptide does not increase enzymatic activity but increases binding to collagen. Cleavage by ADAMTS2 produces a form with reduced collagen-binding activity. In terms of processing, sulfated at Tyr-190 and also at either Tyr-186 or Tyr-187 which enhances binding to collagen.

Its subcellular location is the secreted. It is found in the extracellular space. The catalysed reaction is L-lysyl-[protein] + O2 + H2O = (S)-2-amino-6-oxohexanoyl-[protein] + H2O2 + NH4(+). Responsible for the post-translational oxidative deamination of peptidyl lysine residues in precursors to fibrous collagen and elastin. In terms of biological role, in addition to cross linking of extracellular matrix proteins, it may have a direct role in tumor suppression. This chain is Protein-lysine 6-oxidase (LOX), found in Gallus gallus (Chicken).